Here is a 554-residue protein sequence, read N- to C-terminus: MFS-type transporter tstD (554 aa).

2 stretches are compositionally biased toward polar residues: residues 1–10 (MPEPFNSTMP) and 27–38 (QDSNQPPEMSAS). Residues 1–68 (MPEPFNSTMP…ESENNEPYSV (68 aa)) are disordered. An N-linked (GlcNAc...) asparagine glycan is attached at Asn-6. Basic and acidic residues predominate over residues 39–48 (SEKKHPENEN). The chain crosses the membrane as a helical span at residues 76–96 (LMVLAASLAGFFSPLSASIYY). 2 N-linked (GlcNAc...) asparagine glycosylation sites follow: Asn-107 and Asn-114. The next 5 membrane-spanning stretches (helical) occupy residues 115-135 (LTVTTYLILQGLAPMVTASFS), 142-162 (PGYAICFIVYLAANLGLALQN), 173-193 (LQSAGSSGAIAIANGVVSDII), 202-222 (IAFASVGSILGPSLSPIIGGL), and 231-251 (WIFWFLLIFSGAFCVPFFLFF). The disordered stretch occupies residues 281 to 300 (KEKQRQQRAENEEENANRQR). 3 consecutive transmembrane segments (helical) span residues 311–331 (VFVVFTNLQTVMTLCPAGVAF), 354–374 (IKVALIFLPMGVGGLISALST), and 413–433 (IALPVFCLGCVCTVLYGWLMT). Residue Asn-437 is glycosylated (N-linked (GlcNAc...) asparagine). 3 helical membrane-spanning segments follow: residues 442-462 (IILLFVMSWSFAAFYQVLNVL), 473-493 (MVTAVVNLLRCEIGAGMAAMI), and 504-524 (WSYTIIALIGVAATSPLLLTM).

The protein belongs to the major facilitator superfamily.

It is found in the membrane. Functionally, MFS-type transporter; part of the gene cluster that mediates the biosynthesis of the antihypercholesterolemic agents phomoidrides which are dimeric anhydrides. The chain is MFS-type transporter tstD from Talaromyces stipitatus (strain ATCC 10500 / CBS 375.48 / QM 6759 / NRRL 1006) (Penicillium stipitatum).